The chain runs to 75 residues: Sperm-specific protein PL-I (75 aa).

Positions 2–74 constitute an H15 domain; that stretch reads GSSGMMSMVA…GSAGWVLVPK (73 aa).

This sequence belongs to the histone H1/H5 family. In terms of tissue distribution, sperm.

It is found in the nucleus. Its subcellular location is the chromosome. Its function is as follows. Linker histones are implicated in chromatin remodeling and/or transcriptional regulation during spermiogenesis, the process of spermatid maturation into spermatozoa. This chain is Sperm-specific protein PL-I, found in Spisula solidissima (Atlantic surf-clam).